The primary structure comprises 388 residues: Succinate--CoA ligase [ADP-forming] subunit beta (388 aa).

Residues 9-244 enclose the ATP-grasp domain; it reads KQLFAEYGLP…PSQEDSREAE (236 aa). Residues Lys-46, 53–55, Glu-99, Thr-102, and Glu-107 contribute to the ATP site; that span reads GRG. Mg(2+) is bound by residues Asn-199 and Asp-213. Residues Asn-264 and 321–323 contribute to the substrate site; that span reads GIV.

The protein belongs to the succinate/malate CoA ligase beta subunit family. In terms of assembly, heterotetramer of two alpha and two beta subunits. The cofactor is Mg(2+).

It catalyses the reaction succinate + ATP + CoA = succinyl-CoA + ADP + phosphate. The catalysed reaction is GTP + succinate + CoA = succinyl-CoA + GDP + phosphate. Its pathway is carbohydrate metabolism; tricarboxylic acid cycle; succinate from succinyl-CoA (ligase route): step 1/1. Its function is as follows. Succinyl-CoA synthetase functions in the citric acid cycle (TCA), coupling the hydrolysis of succinyl-CoA to the synthesis of either ATP or GTP and thus represents the only step of substrate-level phosphorylation in the TCA. The beta subunit provides nucleotide specificity of the enzyme and binds the substrate succinate, while the binding sites for coenzyme A and phosphate are found in the alpha subunit. This chain is Succinate--CoA ligase [ADP-forming] subunit beta, found in Marinobacter nauticus (strain ATCC 700491 / DSM 11845 / VT8) (Marinobacter aquaeolei).